The chain runs to 287 residues: ATP phosphoribosyltransferase (287 aa).

The protein belongs to the ATP phosphoribosyltransferase family. Long subfamily. Mg(2+) is required as a cofactor.

The protein resides in the cytoplasm. It catalyses the reaction 1-(5-phospho-beta-D-ribosyl)-ATP + diphosphate = 5-phospho-alpha-D-ribose 1-diphosphate + ATP. It participates in amino-acid biosynthesis; L-histidine biosynthesis; L-histidine from 5-phospho-alpha-D-ribose 1-diphosphate: step 1/9. Its activity is regulated as follows. Feedback inhibited by histidine. Functionally, catalyzes the condensation of ATP and 5-phosphoribose 1-diphosphate to form N'-(5'-phosphoribosyl)-ATP (PR-ATP). Has a crucial role in the pathway because the rate of histidine biosynthesis seems to be controlled primarily by regulation of HisG enzymatic activity. The chain is ATP phosphoribosyltransferase (hisG) from Methanothermobacter thermautotrophicus (strain ATCC 29096 / DSM 1053 / JCM 10044 / NBRC 100330 / Delta H) (Methanobacterium thermoautotrophicum).